The following is a 142-amino-acid chain: MLKHKILGLDVGSKTVGIAISDLMGWTAQGLDTLRINEEQDDLGIDQLVKIIKDNQVGTVVIGLPKNMNNSIGFRGEASIKYKEKLQESIPSIDIVMWDERLSTMAAERSLLEADVSRQKRKKVIDKMAAVFILQGYLDSIQ.

It belongs to the YqgF nuclease family.

Its subcellular location is the cytoplasm. Functionally, could be a nuclease involved in processing of the 5'-end of pre-16S rRNA. The chain is Putative pre-16S rRNA nuclease from Staphylococcus epidermidis (strain ATCC 35984 / DSM 28319 / BCRC 17069 / CCUG 31568 / BM 3577 / RP62A).